A 245-amino-acid polypeptide reads, in one-letter code: Extracellular protein ARB_04177 (245 aa).

Its subcellular location is the secreted. The polypeptide is Extracellular protein ARB_04177 (Arthroderma benhamiae (strain ATCC MYA-4681 / CBS 112371) (Trichophyton mentagrophytes)).